A 443-amino-acid polypeptide reads, in one-letter code: Probable lipase C16A3.12c (443 aa).

Residues 1 to 16 are Cytoplasmic-facing; it reads MSGFNKNQIYWGDYVG. Residues 17–37 traverse the membrane as a helical; Signal-anchor for type II membrane protein segment; sequence VIAAFVGVYTELVARIFIYMI. At 38-443 the chain is on the lumenal side; the sequence is PERVREWFRV…KHFVKQNGFH (406 aa). Residues 116–410 enclose the AB hydrolase-1 domain; that stretch reads VVYCHHGLMT…HYEHLDFLWG (295 aa). Asn134 and Asn177 each carry an N-linked (GlcNAc...) asparagine glycan. Ser210 acts as the Nucleophile in catalysis. Asn304 and Asn335 each carry an N-linked (GlcNAc...) asparagine glycan. Active-site charge relay system residues include Asp378 and His404.

This sequence belongs to the AB hydrolase superfamily. Lipase family.

The protein localises to the cytoplasm. The protein resides in the vacuole. It localises to the membrane. In terms of biological role, probable lipase. The sequence is that of Probable lipase C16A3.12c from Schizosaccharomyces pombe (strain 972 / ATCC 24843) (Fission yeast).